The following is a 435-amino-acid chain: Putative acid phosphatase F26C11.1 (435 aa).

His-38 acts as the Nucleophile in catalysis. The active-site Proton donor is the Asp-317. A disulfide bridge connects residues Cys-382 and Cys-388.

Belongs to the histidine acid phosphatase family.

The catalysed reaction is a phosphate monoester + H2O = an alcohol + phosphate. The polypeptide is Putative acid phosphatase F26C11.1 (Caenorhabditis elegans).